A 347-amino-acid chain; its full sequence is Dihydroorotase (347 aa).

Zn(2+) is bound by residues His14 and His16. Residues 16–18 (HLR) and Asn42 contribute to the substrate site. Zn(2+)-binding residues include Lys100, His137, and His175. N6-carboxylysine is present on Lys100. His137 contributes to the substrate binding site. Leu220 contacts substrate. Position 248 (Asp248) interacts with Zn(2+). Residue Asp248 is part of the active site. Positions 252 and 264 each coordinate substrate.

It belongs to the metallo-dependent hydrolases superfamily. DHOase family. Class II DHOase subfamily. In terms of assembly, homodimer. Requires Zn(2+) as cofactor.

It carries out the reaction (S)-dihydroorotate + H2O = N-carbamoyl-L-aspartate + H(+). Its pathway is pyrimidine metabolism; UMP biosynthesis via de novo pathway; (S)-dihydroorotate from bicarbonate: step 3/3. Catalyzes the reversible cyclization of carbamoyl aspartate to dihydroorotate. The protein is Dihydroorotase of Jannaschia sp. (strain CCS1).